A 152-amino-acid chain; its full sequence is Small ribosomal subunit protein bS6 (152 aa).

The interval 96 to 152 (HEEGPSAMLQKRDRDDRGERGDRGDRGDRGDRGFGGREDRPRRPRPTEESHGGEEEV) is disordered.

This sequence belongs to the bacterial ribosomal protein bS6 family.

Binds together with bS18 to 16S ribosomal RNA. The chain is Small ribosomal subunit protein bS6 from Xanthobacter autotrophicus (strain ATCC BAA-1158 / Py2).